A 230-amino-acid polypeptide reads, in one-letter code: Type II restriction enzyme SinI (230 aa).

It catalyses the reaction Endonucleolytic cleavage of DNA to give specific double-stranded fragments with terminal 5'-phosphates.. Its function is as follows. A P subtype restriction enzyme that recognizes the double-stranded sequence 5'-GGWCC-3' and cleaves after G-1. The sequence is that of Type II restriction enzyme SinI (sinIR) from Salmonella infantis.